A 110-amino-acid polypeptide reads, in one-letter code: Antimicrobial peptide microplusin (110 aa).

The N-terminal stretch at 1 to 20 is a signal peptide; it reads MKAIFVSALLVVALVASTSA. Cystine bridges form between Cys-26–Cys-72, Cys-39–Cys-100, and Cys-61–Cys-66.

In terms of tissue distribution, expressed in the hemocytes, fat body and ovaries.

Its subcellular location is the secreted. Its function is as follows. Has bacteriostatic activity against the Gram-positive bacterium M.luteus, but not against Gram-negative bacterium E.coli SBS363. Has fungistatic activity against C.neoformans, but not C.albicans. Binds and sequesters copper and iron ions. Copper-chelating is crucial for antimicrobial activity against M.luteus. This Rhipicephalus microplus (Cattle tick) protein is Antimicrobial peptide microplusin.